Reading from the N-terminus, the 306-residue chain is N-acetylmuramic acid 6-phosphate etherase (306 aa).

Residues 55–218 (AAATLLAGGR…STGAMIKIGK (164 aa)) enclose the SIS domain. The Proton donor role is filled by E83. The active site involves E114.

The protein belongs to the GCKR-like family. MurNAc-6-P etherase subfamily. As to quaternary structure, homodimer.

The catalysed reaction is N-acetyl-D-muramate 6-phosphate + H2O = N-acetyl-D-glucosamine 6-phosphate + (R)-lactate. Its pathway is amino-sugar metabolism; 1,6-anhydro-N-acetylmuramate degradation. It participates in amino-sugar metabolism; N-acetylmuramate degradation. The protein operates within cell wall biogenesis; peptidoglycan recycling. In terms of biological role, specifically catalyzes the cleavage of the D-lactyl ether substituent of MurNAc 6-phosphate, producing GlcNAc 6-phosphate and D-lactate. Together with AnmK, is also required for the utilization of anhydro-N-acetylmuramic acid (anhMurNAc) either imported from the medium or derived from its own cell wall murein, and thus plays a role in cell wall recycling. This Erwinia tasmaniensis (strain DSM 17950 / CFBP 7177 / CIP 109463 / NCPPB 4357 / Et1/99) protein is N-acetylmuramic acid 6-phosphate etherase.